A 169-amino-acid chain; its full sequence is Peptide methionine sulfoxide reductase MsrA 1 (169 aa).

Cys-12 is a catalytic residue.

Belongs to the MsrA Met sulfoxide reductase family.

It catalyses the reaction L-methionyl-[protein] + [thioredoxin]-disulfide + H2O = L-methionyl-(S)-S-oxide-[protein] + [thioredoxin]-dithiol. It carries out the reaction [thioredoxin]-disulfide + L-methionine + H2O = L-methionine (S)-S-oxide + [thioredoxin]-dithiol. Functionally, has an important function as a repair enzyme for proteins that have been inactivated by oxidation. Catalyzes the reversible oxidation-reduction of methionine sulfoxide in proteins to methionine. This Staphylococcus aureus (strain Mu50 / ATCC 700699) protein is Peptide methionine sulfoxide reductase MsrA 1 (msrA1).